We begin with the raw amino-acid sequence, 462 residues long: Argininosuccinate lyase (462 aa).

It belongs to the lyase 1 family. Argininosuccinate lyase subfamily.

The protein resides in the cytoplasm. The catalysed reaction is 2-(N(omega)-L-arginino)succinate = fumarate + L-arginine. It functions in the pathway amino-acid biosynthesis; L-arginine biosynthesis; L-arginine from L-ornithine and carbamoyl phosphate: step 3/3. In Streptococcus agalactiae serotype III (strain NEM316), this protein is Argininosuccinate lyase.